Here is a 663-residue protein sequence, read N- to C-terminus: Bifunctional polymyxin resistance protein ArnA (663 aa).

The segment at 1 to 304 (MKAVVFAYHD…ELGLVAGMRL (304 aa)) is formyltransferase ArnAFT. The Proton donor; for formyltransferase activity role is filled by His-104. Residues Arg-114 and 136 to 140 (TMRPD) contribute to the (6R)-10-formyltetrahydrofolate site. The segment at 316–663 (RLTRVLILGV…GAVSTGVEHD (348 aa)) is dehydrogenase ArnADH. Residues Asp-349 and 370 to 371 (DI) each bind NAD(+). UDP-alpha-D-glucuronate contacts are provided by residues Ala-395, Tyr-400, and 434–435 (TS). The active-site Proton acceptor; for decarboxylase activity is the Glu-436. UDP-alpha-D-glucuronate contacts are provided by residues Arg-462, Asn-494, 528-537 (QLVDGGAQKR), and Tyr-615. The active-site Proton donor; for decarboxylase activity is the Arg-621.

In the N-terminal section; belongs to the Fmt family. UDP-L-Ara4N formyltransferase subfamily. It in the C-terminal section; belongs to the NAD(P)-dependent epimerase/dehydratase family. UDP-glucuronic acid decarboxylase subfamily. As to quaternary structure, homohexamer, formed by a dimer of trimers.

The catalysed reaction is UDP-alpha-D-glucuronate + NAD(+) = UDP-beta-L-threo-pentopyranos-4-ulose + CO2 + NADH. It catalyses the reaction UDP-4-amino-4-deoxy-beta-L-arabinose + (6R)-10-formyltetrahydrofolate = UDP-4-deoxy-4-formamido-beta-L-arabinose + (6S)-5,6,7,8-tetrahydrofolate + H(+). It functions in the pathway nucleotide-sugar biosynthesis; UDP-4-deoxy-4-formamido-beta-L-arabinose biosynthesis; UDP-4-deoxy-4-formamido-beta-L-arabinose from UDP-alpha-D-glucuronate: step 1/3. The protein operates within nucleotide-sugar biosynthesis; UDP-4-deoxy-4-formamido-beta-L-arabinose biosynthesis; UDP-4-deoxy-4-formamido-beta-L-arabinose from UDP-alpha-D-glucuronate: step 3/3. Its pathway is bacterial outer membrane biogenesis; lipopolysaccharide biosynthesis. Functionally, bifunctional enzyme that catalyzes the oxidative decarboxylation of UDP-glucuronic acid (UDP-GlcUA) to UDP-4-keto-arabinose (UDP-Ara4O) and the addition of a formyl group to UDP-4-amino-4-deoxy-L-arabinose (UDP-L-Ara4N) to form UDP-L-4-formamido-arabinose (UDP-L-Ara4FN). The modified arabinose is attached to lipid A and is required for resistance to polymyxin and cationic antimicrobial peptides. The chain is Bifunctional polymyxin resistance protein ArnA from Aeromonas salmonicida (strain A449).